The sequence spans 497 residues: PHD finger protein 10 (497 aa).

The segment at Met-1–Gln-61 is disordered. Phosphoserine occurs at positions 11, 35, and 49. The tract at residues Met-88 to Gln-184 is essential to induce neural progenitor proliferation. Residues Met-88–Leu-294 are SAY. Residue Lys-240 forms a Glycyl lysine isopeptide (Lys-Gly) (interchain with G-Cter in SUMO2) linkage. Ser-269 bears the Phosphoserine mark. The segment covering Glu-284–Asp-295 has biased composition (low complexity). Residues Glu-284–Pro-367 are disordered. Positions Leu-291–Asp-333 are essential to induce neural progenitor proliferation. Ser-296, Ser-300, Ser-326, and Ser-330 each carry phosphoserine. Acidic residues predominate over residues Ser-296 to Gly-307. A compositionally biased stretch (polar residues) spans Thr-317–Glu-327. Residues Lys-344–Lys-358 are compositionally biased toward basic and acidic residues. A PHD-type 1; degenerate zinc finger spans residues Leu-378–Cys-435. Residue Lys-384 forms a Glycyl lysine isopeptide (Lys-Gly) (interchain with G-Cter in SUMO2) linkage. A PHD-type 2; degenerate zinc finger spans residues Ile-437–Ala-480.

Belongs to the SAYP family. In terms of assembly, component of neural progenitors-specific chromatin remodeling complex (npBAF complex) composed of at least, ARID1A/BAF250A or ARID1B/BAF250B, SMARCD1/BAF60A, SMARCD3/BAF60C, SMARCA2/BRM/BAF190B, SMARCA4/BRG1/BAF190A, SMARCB1/BAF47, SMARCC1/BAF155, SMARCE1/BAF57, SMARCC2/BAF170, PHF10/BAF45A, ACTL6A/BAF53A and actin. Interacts with ACTL6A/BAF53A, SMARCA2/BRM/BAF190B, SMARCA4/BRG1/BAF190A and PBRM1/BAF180.

Its subcellular location is the nucleus. In terms of biological role, involved in transcription activity regulation by chromatin remodeling. Belongs to the neural progenitors-specific chromatin remodeling complex (npBAF complex) and is required for the proliferation of neural progenitors. During neural development a switch from a stem/progenitor to a post-mitotic chromatin remodeling mechanism occurs as neurons exit the cell cycle and become committed to their adult state. The transition from proliferating neural stem/progenitor cells to post-mitotic neurons requires a switch in subunit composition of the npBAF and nBAF complexes. As neural progenitors exit mitosis and differentiate into neurons, npBAF complexes which contain ACTL6A/BAF53A and PHF10/BAF45A, are exchanged for homologous alternative ACTL6B/BAF53B and DPF1/BAF45B or DPF3/BAF45C subunits in neuron-specific complexes (nBAF). The npBAF complex is essential for the self-renewal/proliferative capacity of the multipotent neural stem cells. The nBAF complex along with CREST plays a role regulating the activity of genes essential for dendrite growth. The sequence is that of PHD finger protein 10 (Phf10) from Rattus norvegicus (Rat).